We begin with the raw amino-acid sequence, 483 residues long: Glutamate--tRNA ligase (483 aa).

The short motif at 9 to 19 is the 'HIGH' region element; sequence PSPTGFLHIGN. The short motif at 253 to 257 is the 'KMSKS' region element; it reads KLSKR. Lys256 lines the ATP pocket.

This sequence belongs to the class-I aminoacyl-tRNA synthetase family. Glutamate--tRNA ligase type 1 subfamily. Monomer.

It localises to the cytoplasm. The enzyme catalyses tRNA(Glu) + L-glutamate + ATP = L-glutamyl-tRNA(Glu) + AMP + diphosphate. In terms of biological role, catalyzes the attachment of glutamate to tRNA(Glu) in a two-step reaction: glutamate is first activated by ATP to form Glu-AMP and then transferred to the acceptor end of tRNA(Glu). This is Glutamate--tRNA ligase from Mycoplasma capricolum subsp. capricolum (strain California kid / ATCC 27343 / NCTC 10154).